Consider the following 294-residue polypeptide: Probable 2-(5''-triphosphoribosyl)-3'-dephosphocoenzyme-A synthase (294 aa).

The protein belongs to the CitG/MdcB family.

The enzyme catalyses 3'-dephospho-CoA + ATP = 2'-(5''-triphospho-alpha-D-ribosyl)-3'-dephospho-CoA + adenine. The sequence is that of Probable 2-(5''-triphosphoribosyl)-3'-dephosphocoenzyme-A synthase from Streptococcus pyogenes serotype M2 (strain MGAS10270).